A 137-amino-acid polypeptide reads, in one-letter code: Acyl carrier protein 4, chloroplastic (137 aa).

The N-terminal 48 residues, 1 to 48 (MASLSTTSLSFKAPSTTISQVLRKASSSQSVTFGRFTSSTKSLRLQIS), are a transit peptide targeting the chloroplast. The region spanning 53-128 (AETVQKVSDI…EAADLIEDLV (76 aa)) is the Carrier domain. The residue at position 88 (S88) is an O-(pantetheine 4'-phosphoryl)serine.

The protein belongs to the acyl carrier protein (ACP) family. In terms of processing, 4'-phosphopantetheine is transferred from CoA to a specific serine of apo-ACP by acpS. This modification is essential for activity because fatty acids are bound in thioester linkage to the sulfhydryl of the prosthetic group.

It is found in the plastid. The protein localises to the chloroplast. Functionally, carrier of the growing fatty acid chain in fatty acid biosynthesis that plays a major role in the biosynthesis of fatty acids in leaves. Required for the biosynthesis of chloroplast photosynthetic membrane lipids such as monogalactosyldiacylglycerol, digalactosyldiacylglycerol and phosphatidylglycerol. Is essential for the biosynthesis of the cuticular wax and cutin polymers in leaves, and for the establishment of systemic acquired resistance (SAR). The chain is Acyl carrier protein 4, chloroplastic (ACP4) from Arabidopsis thaliana (Mouse-ear cress).